Consider the following 305-residue polypeptide: Ribonuclease BN (305 aa).

Zn(2+) is bound by residues H64, H66, D68, H69, H141, D212, and H270. D68 functions as the Proton acceptor in the catalytic mechanism.

This sequence belongs to the RNase Z family. RNase BN subfamily. Homodimer. Requires Zn(2+) as cofactor.

In terms of biological role, zinc phosphodiesterase, which has both exoribonuclease and endoribonuclease activities. The chain is Ribonuclease BN from Escherichia coli O81 (strain ED1a).